Here is a 245-residue protein sequence, read N- to C-terminus: 1-(5-phosphoribosyl)-5-[(5-phosphoribosylamino)methylideneamino] imidazole-4-carboxamide isomerase (245 aa).

Aspartate 8 serves as the catalytic Proton acceptor. Aspartate 130 functions as the Proton donor in the catalytic mechanism.

Belongs to the HisA/HisF family.

It is found in the cytoplasm. It catalyses the reaction 1-(5-phospho-beta-D-ribosyl)-5-[(5-phospho-beta-D-ribosylamino)methylideneamino]imidazole-4-carboxamide = 5-[(5-phospho-1-deoxy-D-ribulos-1-ylimino)methylamino]-1-(5-phospho-beta-D-ribosyl)imidazole-4-carboxamide. Its pathway is amino-acid biosynthesis; L-histidine biosynthesis; L-histidine from 5-phospho-alpha-D-ribose 1-diphosphate: step 4/9. In Pseudomonas savastanoi pv. phaseolicola (strain 1448A / Race 6) (Pseudomonas syringae pv. phaseolicola (strain 1448A / Race 6)), this protein is 1-(5-phosphoribosyl)-5-[(5-phosphoribosylamino)methylideneamino] imidazole-4-carboxamide isomerase.